We begin with the raw amino-acid sequence, 468 residues long: Probable citrate synthase, mitochondrial (468 aa).

Active-site residues include H303, H349, and D404.

This sequence belongs to the citrate synthase family. In terms of assembly, homodimer.

It localises to the mitochondrion matrix. The catalysed reaction is oxaloacetate + acetyl-CoA + H2O = citrate + CoA + H(+). Its pathway is carbohydrate metabolism; tricarboxylic acid cycle; isocitrate from oxaloacetate: step 1/2. This Caenorhabditis briggsae protein is Probable citrate synthase, mitochondrial (cts-1).